Here is a 414-residue protein sequence, read N- to C-terminus: Lysocardiolipin acyltransferase 1 (414 aa).

2 helical membrane passes run 47-67 and 86-106; these read FILTLFWGSFFGSIFMLSPFL and ATWLTLPVALLETMFGVKVII. The HXXXXD motif signature appears at 123-128; that stretch reads HRTRMD. Lys221 carries the post-translational modification N6-acetyllysine. 2 helical membrane-spanning segments follow: residues 340–360 and 362–382; these read LRVLVVKLLSILYWTLFSPAM and LLIYLYSLVKWYFIITIVIFV.

The protein belongs to the 1-acyl-sn-glycerol-3-phosphate acyltransferase family. As to expression, expressed at higher level in heart, kidney and pancreas than in brain, spleen, liver, lung, small intestine and placenta.

It localises to the endoplasmic reticulum membrane. The enzyme catalyses a 1-acyl-sn-glycero-3-phosphate + an acyl-CoA = a 1,2-diacyl-sn-glycero-3-phosphate + CoA. It carries out the reaction a 1-acyl-sn-glycero-3-phospho-(1D-myo-inositol) + an acyl-CoA = a 1,2-diacyl-sn-glycero-3-phospho-(1D-myo-inositol) + CoA. It catalyses the reaction 1-acyl-sn-glycero-3-phospho-(1'-sn-glycerol) + an acyl-CoA = a 1,2-diacyl-sn-glycero-3-phospho-(1'-sn-glycerol) + CoA. The catalysed reaction is 1-hexadecanoyl-sn-glycero-3-phosphate + (9Z)-octadecenoyl-CoA = 1-hexadecanoyl-2-(9Z-octadecenoyl)-sn-glycero-3-phosphate + CoA. The enzyme catalyses 1-(9Z-octadecenoyl)-sn-glycero-3-phosphate + (9Z)-octadecenoyl-CoA = 1,2-di-(9Z-octadecenoyl)-sn-glycero-3-phosphate + CoA. It carries out the reaction 1-(9Z,12Z)-octadecadienoyl-sn-glycero-3-phosphate + (9Z)-octadecenoyl-CoA = 1-(9Z,12Z)-octadecadienoyl-2-(9Z)-octadecenoyl-sn-glycero-3-phosphate + CoA. It catalyses the reaction 1-(9Z,12Z,15Z)-octadecatrienoyl-sn-glycero-3-phosphate + (9Z)-octadecenoyl-CoA = 1-(9Z,12Z,15Z)-octadecatrienoyl-2-(9Z)-octadecenoyl-sn-glycero-3-phosphate + CoA. The catalysed reaction is 1-(9Z-octadecenoyl)-sn-glycero-3-phosphate + hexadecanoyl-CoA = 1-(9Z)-octadecenoyl-2-hexadecanoyl-sn-glycero-3-phosphate + CoA. The enzyme catalyses 1-(9Z-octadecenoyl)-sn-glycero-3-phosphate + octadecanoyl-CoA = 1-(9Z-octadecenoyl)-2-octadecanoyl-sn-glycero-3-phosphate + CoA. It carries out the reaction 1-acyl-sn-glycero-3-phospho-(1'-sn-glycerol) + (9Z)-octadecenoyl-CoA = 1-acyl-2-(9Z-octadecenoyl)-sn-glycero-3-phospho-(1'-sn-glycerol) + CoA. It catalyses the reaction a 1-acyl-sn-glycero-3-phospho-(1D-myo-inositol) + (9Z)-octadecenoyl-CoA = a 1-acyl-2-(9Z-octadecenoyl)-sn-glycero-3-phospho-(1D-myo-inositol) + CoA. The catalysed reaction is 1-hexadecanoyl-sn-glycero-3-phospho-(1D-myo-inositol) + hexadecanoyl-CoA = 1,2-dihexadecanoyl-sn-glycero-3-phospho-(1D-myo-inositol) + CoA. The enzyme catalyses 1-hexadecanoyl-sn-glycero-3-phospho-(1D-myo-inositol) + octadecanoyl-CoA = 1-hexadecanoyl-2-octadecanoyl-sn-glycero-3-phospho-(1D-myo-inositol) + CoA. It carries out the reaction 1-hexadecanoyl-sn-glycero-3-phospho-(1D-myo-inositol) + (9Z)-octadecenoyl-CoA = 1-hexadecanoyl-2-(9Z-octadecenoyl)-sn-glycero-3-phospho-(1D-myo-inositol) + CoA. It catalyses the reaction 1-hexadecanoyl-sn-glycero-3-phospho-(1D-myo-inositol) + (9Z,12Z)-octadecadienoyl-CoA = 1-hexadecanoyl-2-(9Z,12Z-octadecadienoyl)-sn-glycero-3-phospho-(1D-myo-inositol) + CoA. The catalysed reaction is 1-hexadecanoyl-sn-glycero-3-phospho-(1D-myo-inositol) + (5Z,8Z,11Z,14Z)-eicosatetraenoyl-CoA = 1-hexadecanoyl-2-(5Z,8Z,11Z,14Z-eicosatetraenoyl)-sn-glycero-3-phospho-D-myo-inositol + CoA. The enzyme catalyses 1-hexadecanoyl-sn-glycero-3-phospho-(1'-sn-glycerol) + hexadecanoyl-CoA = 1,2-dihexadecanoyl-sn-glycero-3-phospho-(1'-sn-glycerol) + CoA. It carries out the reaction 1-hexadecanoyl-sn-glycero-3-phospho-(1'-sn-glycerol) + octadecanoyl-CoA = 1-hexadecanoyl-2-octadecanoyl-sn-glycero-3-phospho-(1'-sn-glycerol) + CoA. It catalyses the reaction 1-hexadecanoyl-sn-glycero-3-phospho-(1'-sn-glycerol) + (9Z)-octadecenoyl-CoA = 1-hexadecanoyl-2-(9Z-octadecenoyl)-sn-glycero-3-phospho-(1'-sn-glycerol) + CoA. The catalysed reaction is 1-hexadecanoyl-sn-glycero-3-phospho-(1'-sn-glycerol) + (9Z,12Z)-octadecadienoyl-CoA = 1-hexadecanoyl-2-(9Z,12Z-octadecadienoyl)-sn-glycero-3-phospho-(1'-sn-glycerol) + CoA. The enzyme catalyses 1-tetradecanoyl-sn-glycero-3-phospho-(1'-sn-glycerol) + (9Z)-octadecenoyl-CoA = 1-tetradecanoyl-2-(9Z-octadecenoyl)-sn-glycero-3-phospho-(1'-sn-glycerol) + CoA. It carries out the reaction 1-octadecanoyl-sn-glycero-3-phospho-(1'-sn-glycerol) + (9Z)-octadecenoyl-CoA = 1-octadecanoyl-2-(9Z-octadecenoyl)-sn-glycero-3-phospho-(1'-sn-glycerol) + CoA. It catalyses the reaction 1-(9Z-octadecenoyl)-sn-glycero-3-phospho-(1'-sn-glycerol) + (9Z)-octadecenoyl-CoA = 1,2-di-(9Z-octadecenoyl)-sn-glycero-3-phospho-(1'-sn-glycerol) + CoA. The catalysed reaction is 1-hexadecanoyl-sn-glycero-3-phospho-(1D-myo-inositol) + dodecanoyl-CoA = 1-hexadecanoyl-2-dodecanoyl-sn-glycero-3-phospho-(1D-myo-inositol) + CoA. The enzyme catalyses 1',3'-bis-[1-acyl-sn-glycero-3-phospho]-glycerol + (9Z)-octadecenoyl-CoA = 1'-[1-acyl-2-(9Z)-octadecenoyl-sn-glycero-3-phospho],3'-[1-acyl,2-hydroxy-sn-glycero-3-phospho]-glycerol + CoA. It carries out the reaction 1'-[1,2-diacyl-sn-glycero-3-phospho],3'-[1-acyl-sn-glycero-3-phospho]-glycerol + (9Z)-octadecenoyl-CoA = 1'-[1,2-diacyl-sn-glycero-3-phospho],3'-[1-acyl,2-(9Z)-octadecenoyl-sn-glycero-3-phospho]-glycerol + CoA. It catalyses the reaction 1'-[1,2-diacyl-sn-glycero-3-phospho],3'-[1-acyl-sn-glycero-3-phospho]-glycerol + (9Z,12Z)-octadecadienoyl-CoA = 1'-[1,2-diacyl-sn-glycero-3-phospho],3'-[1-acyl,2-(9Z,12Z)-octadecadienoyl-sn-glycero-3-phospho]-glycerol + CoA. The catalysed reaction is 1'-[1,2-diacyl-sn-glycero-3-phospho],3'-[1-acyl-sn-glycero-3-phospho]-glycerol + dodecanoyl-CoA = 1'-[1,2-diacyl-sn-glycero-3-phospho],3'-[1-acyl,2-dodecanoyl-sn-glycero-3-phospho]-glycerol + CoA. The enzyme catalyses 1',3'-bis-[1-acyl-sn-glycero-3-phospho]-glycerol + dodecanoyl-CoA = 1'-[1-acyl-2-dodecanoyl-sn-glycero-3-phospho],3'-[1-acyl,2-hydroxy-sn-glycero-3-phospho]-glycerol + CoA. It carries out the reaction a 1-acyl-sn-glycero-3-phosphate + (9Z)-octadecenoyl-CoA = a 1-acyl-2-(9Z-octadecenoyl)-sn-glycero-3-phosphate + CoA. It catalyses the reaction 1',3'-bis-[1-acyl-sn-glycero-3-phospho]-glycerol + (9Z,12Z)-octadecadienoyl-CoA = 1'-[1-acyl-2-(9Z,12Z)-octadecadienoyl-sn-glycero-3-phospho],3'-[1-acyl,2-hydroxy-sn-glycero-3-phospho]-glycerol + CoA. The catalysed reaction is 1',3'-bis-[1-acyl-sn-glycero-3-phospho]-glycerol + hexadecanoyl-CoA = 1'-[1-acyl-2-hexadecanoyl-sn-glycero-3-phospho],3'-[1-acyl,2-hydroxy-sn-glycero-3-phospho]-glycerol + CoA. The enzyme catalyses 1',3'-bis-[1-acyl-sn-glycero-3-phospho]-glycerol + octadecanoyl-CoA = 1'-[1-acyl-2-octadecanoyl-sn-glycero-3-phospho],3'-[1-acyl,2-hydroxy-sn-glycero-3-phospho]-glycerol + CoA. It carries out the reaction 1'-[1,2-diacyl-sn-glycero-3-phospho],3'-[1-acyl-sn-glycero-3-phospho]-glycerol + octanoyl-CoA = 1'-[1,2-diacyl-sn-glycero-3-phospho],3'-[1-acyl,2-octanoyl-sn-glycero-3-phospho]-glycerol + CoA. It catalyses the reaction 1',3'-bis-[1-acyl-sn-glycero-3-phospho]-glycerol + octanoyl-CoA = 1'-[1-acyl-2-octanoyl-sn-glycero-3-phospho],3'-[1-acyl,2-hydroxy-sn-glycero-3-phospho]-glycerol + CoA. The catalysed reaction is 1'-[1,2-diacyl-sn-glycero-3-phospho],3'-[1-acyl-sn-glycero-3-phospho]-glycerol + hexadecanoyl-CoA = 1'-[1,2-diacyl-sn-glycero-3-phospho],3'-[1-acyl,2-hexadecanoyl-sn-glycero-3-phospho]-glycerol + CoA. The enzyme catalyses 1'-[1,2-diacyl-sn-glycero-3-phospho],3'-[1-acyl-sn-glycero-3-phospho]-glycerol + (5Z,8Z,11Z,14Z)-eicosatetraenoyl-CoA = 1'-[1,2-diacyl-sn-glycero-3-phospho],3'-[1-acyl,2-(5Z,8Z,11Z,14Z)-eicosatetraenoyl-sn-glycero-3-phospho]-glycerol + CoA. It carries out the reaction 1',3'-bis-[1-acyl-sn-glycero-3-phospho]-glycerol + (5Z,8Z,11Z,14Z)-eicosatetraenoyl-CoA = 1'-[1-acyl-2-(5Z,8Z,11Z,14Z)-eicosatetraenoyl-sn-glycero-3-phospho],3'-[1-acyl,2-hydroxy-sn-glycero-3-phospho]-glycerol + CoA. It catalyses the reaction a 1-acyl-sn-glycero-3-phospho-(1D-myo-inositol) + octadecanoyl-CoA = a 1-acyl-2-octadecanoyl-sn-glycero-3-phospho-(1D-myo-inositol) + CoA. The catalysed reaction is a 2-acyl-sn-glycero-3-phospho-D-myo-inositol + octadecanoyl-CoA = 1-octadecanoyl-2-acyl-sn-glycero-3-phospho-1D-myo-inositol + CoA. The protein operates within phospholipid metabolism; CDP-diacylglycerol biosynthesis; CDP-diacylglycerol from sn-glycerol 3-phosphate: step 2/3. In terms of biological role, exhibits acyl-CoA:lysocardiolipin acyltransferase (ALCAT) activity; catalyzes the reacylation of lyso-cardiolipin to cardiolipin (CL), a key step in CL remodeling. Recognizes both monolysocardiolipin and dilysocardiolipin as substrates with a preference for linoleoyl-CoA and oleoyl-CoA as acyl donors. Also exhibits 1-acyl-sn-glycerol-3-phosphate acyltransferase activity (AGPAT) activity; converts 1-acyl-sn-glycerol-3- phosphate (lysophosphatidic acid or LPA) into 1,2-diacyl-sn-glycerol-3- phosphate (phosphatidic acid or PA) by incorporating an acyl moiety at the sn-2 position of the glycerol backbone. Possesses both lysophosphatidylinositol acyltransferase (LPIAT) and lysophosphatidylglycerol acyltransferase (LPGAT) activities. Required for establishment of the hematopoietic and endothelial lineages. This Homo sapiens (Human) protein is Lysocardiolipin acyltransferase 1 (LCLAT1).